The chain runs to 359 residues: Tropomodulin-1 (359 aa).

A disordered region spans residues Glu36–Pro61. Positions Pro39 to His138 are tropomyosin-binding.

It belongs to the tropomodulin family. In terms of assembly, binds to the N-terminus of tropomyosin and to actin. Interacts with FLII. In terms of tissue distribution, highly expressed in the erythrocyte, heart and skeletal muscle.

It localises to the cytoplasm. The protein localises to the cytoskeleton. In terms of biological role, blocks the elongation and depolymerization of the actin filaments at the pointed end. The Tmod/TM complex contributes to the formation of the short actin protofilament, which in turn defines the geometry of the membrane skeleton. In Mus musculus (Mouse), this protein is Tropomodulin-1 (Tmod1).